The primary structure comprises 356 residues: UDP-N-acetylglucosamine--N-acetylmuramyl-(pentapeptide) pyrophosphoryl-undecaprenol N-acetylglucosamine transferase (356 aa).

Residues serine 12–glycine 14, asparagine 120, arginine 163, serine 187, and glutamine 286 each bind UDP-N-acetyl-alpha-D-glucosamine.

This sequence belongs to the glycosyltransferase 28 family. MurG subfamily.

The protein localises to the cell inner membrane. It carries out the reaction di-trans,octa-cis-undecaprenyl diphospho-N-acetyl-alpha-D-muramoyl-L-alanyl-D-glutamyl-meso-2,6-diaminopimeloyl-D-alanyl-D-alanine + UDP-N-acetyl-alpha-D-glucosamine = di-trans,octa-cis-undecaprenyl diphospho-[N-acetyl-alpha-D-glucosaminyl-(1-&gt;4)]-N-acetyl-alpha-D-muramoyl-L-alanyl-D-glutamyl-meso-2,6-diaminopimeloyl-D-alanyl-D-alanine + UDP + H(+). Its pathway is cell wall biogenesis; peptidoglycan biosynthesis. Cell wall formation. Catalyzes the transfer of a GlcNAc subunit on undecaprenyl-pyrophosphoryl-MurNAc-pentapeptide (lipid intermediate I) to form undecaprenyl-pyrophosphoryl-MurNAc-(pentapeptide)GlcNAc (lipid intermediate II). The polypeptide is UDP-N-acetylglucosamine--N-acetylmuramyl-(pentapeptide) pyrophosphoryl-undecaprenol N-acetylglucosamine transferase (Pelagibacter ubique (strain HTCC1062)).